The following is a 413-amino-acid chain: Large ribosomal subunit protein uL4 (413 aa).

The residue at position 2 (Ala2) is an N-acetylalanine. The residue at position 14 (Lys14) is an N6-acetyllysine. Arg97 carries the omega-N-methylarginine modification. Lys106 carries the N6-acetyllysine modification. A Glycyl lysine isopeptide (Lys-Gly) (interchain with G-Cter in SUMO2) cross-link involves residue Lys239. Lys259 is subject to N6-acetyllysine. Position 266 is a phosphothreonine (Thr266). Phosphoserine occurs at positions 290 and 295. Arg300 is modified (citrulline). Lys327 is covalently cross-linked (Glycyl lysine isopeptide (Lys-Gly) (interchain with G-Cter in SUMO2)). Lys333 is subject to N6-acetyllysine. Residues 355-413 (AAALAAKSDPKEAPAKKKPVVGKKKKPVVGRKAAAAKKPAADKKAADKRAGPEDKKPAA) form a disordered region. Lys361 carries the N6-acetyllysine; alternate modification. Lys361 participates in a covalent cross-link: Glycyl lysine isopeptide (Lys-Gly) (interchain with G-Cter in SUMO1); alternate. Position 362 is a phosphoserine (Ser362). Over residues 370–383 (KKKPVVGKKKKPVV) the composition is skewed to basic residues. The segment covering 393-413 (PAADKKAADKRAGPEDKKPAA) has biased composition (basic and acidic residues).

It belongs to the universal ribosomal protein uL4 family. In terms of assembly, component of the large ribosomal subunit. May bind IPO9 with low affinity. Interacts with RBM3. Citrullinated by PADI4.

It localises to the cytoplasm. Functionally, component of the large ribosomal subunit. The ribosome is a large ribonucleoprotein complex responsible for the synthesis of proteins in the cell. This chain is Large ribosomal subunit protein uL4 (RPL4), found in Oryctolagus cuniculus (Rabbit).